We begin with the raw amino-acid sequence, 123 residues long: Class II hydrophobin 2 (123 aa).

The N-terminal stretch at 1–16 (MRSFLVIATLAVGAFG) is a signal peptide. 4 disulfides stabilise this stretch: Cys22/Cys70, Cys32/Cys61, Cys33/Cys45, and Cys71/Cys82.

The protein belongs to the cerato-ulmin hydrophobin family. As to quaternary structure, homodimer. Homodimers further self-assemble to form highly ordered films at water-air interfaces through intermolecular interactions.

It localises to the secreted. Its subcellular location is the cell wall. Its function is as follows. Aerial growth, conidiation, and dispersal of filamentous fungi in the environment rely upon a capability of their secreting small amphipathic proteins called hydrophobins (HPBs) with low sequence identity. Class I can self-assemble into an outermost layer of rodlet bundles on aerial cell surfaces, conferring cellular hydrophobicity that supports fungal growth, development and dispersal; whereas Class II form highly ordered films at water-air interfaces through intermolecular interactions but contribute nothing to the rodlet structure. Hyd2 is a class II hydrophobin that plays probably a role in intraspecific signaling or hyphal fusion. Not necessary for root adhesion and colonization. Might play an essential role since no deletion mutants could be obtained. The chain is Class II hydrophobin 2 from Bionectria ochroleuca (Gliocladium roseum).